Consider the following 65-residue polypeptide: Small ribosomal subunit protein bS21 (65 aa).

Belongs to the bacterial ribosomal protein bS21 family.

This Acidobacterium capsulatum (strain ATCC 51196 / DSM 11244 / BCRC 80197 / JCM 7670 / NBRC 15755 / NCIMB 13165 / 161) protein is Small ribosomal subunit protein bS21.